The following is a 624-amino-acid chain: Alpha-galactosidase 3 (624 aa).

A signal peptide spans 1–22 (MSPSAAVLIPLAAAVLLRPVVG). N37, N56, N197, N259, and N293 each carry an N-linked (GlcNAc...) asparagine glycan. D347 functions as the Nucleophile in the catalytic mechanism. N-linked (GlcNAc...) asparagine glycosylation is present at N393. Residue D412 is the Proton donor of the active site. An N-linked (GlcNAc...) asparagine glycan is attached at N469.

Belongs to the glycosyl hydrolase 27 family.

Its subcellular location is the secreted. The catalysed reaction is Hydrolysis of terminal, non-reducing alpha-D-galactose residues in alpha-D-galactosides, including galactose oligosaccharides, galactomannans and galactolipids.. In terms of biological role, alpha-galactosidase involved in the degradation of simple oligosaccharides like melibiose, raffinose and stachyose, and of polymeric galacto(gluco)mannans. In Hypocrea jecorina (Trichoderma reesei), this protein is Alpha-galactosidase 3 (agl3).